A 226-amino-acid polypeptide reads, in one-letter code: Protein DEHYDRATION-INDUCED 19 (226 aa).

A disordered region spans residues Phe-158 to Ala-208. Basic and acidic residues predominate over residues Leu-196 to Arg-205.

The protein belongs to the Di19 family.

The protein is Protein DEHYDRATION-INDUCED 19 (DI19-1) of Oryza sativa subsp. japonica (Rice).